A 213-amino-acid polypeptide reads, in one-letter code: MGRNKKKRDGDDRRQRLILSFDEEKRREYLTGFHKRKVERKKAAIEEIKQRLKEEQKKLREERHQEYLKMLAEREEALEEADELDRLVTAKTESVQYDHPNHTVTVTTISDLDLSGARLLGLPTPEQGAGSGPEEEVSSMEKPTRALPRKSRDPLLSQRISSLTASLHAHSRKKVKKKRLRRAQDTTKKPPSATRTSKTRRRRLTGKARHSGE.

The stretch at Gly-32–Val-95 forms a coiled coil. The tract at residues Ala-117–Glu-213 is disordered. Composition is skewed to basic residues over residues Ala-169–Arg-181 and Ser-197–Glu-213.

This sequence belongs to the RRP17 family. Interacts with KIAA1191.

Its subcellular location is the nucleus. The protein resides in the nucleolus. It is found in the cytoplasm. Its function is as follows. Multifunctional RNA binding protein that plays a role in RNA metabolism and DNA maintenance. Participates in the resolution of DNA stress and the maintenance of genome integrity by localizing to sites of DNA insults. Also plays a role in proper nucleolar organization by limiting nucleolar size and regulating nucleolar number. Mechanistically, regulates the nucleolar levels of fibrillarin and nucleolin, two key players in pre-rRNA processing and ribosome assembly. This is Nucleolar protein 12 (NOL12) from Bos taurus (Bovine).